Consider the following 397-residue polypeptide: Enoyl-[acyl-carrier-protein] reductase [NADH] (397 aa).

NAD(+)-binding positions include 48-53 (GASTGY), 74-75 (FE), 111-112 (DA), and 139-140 (VA). Tyrosine 225 is a binding site for substrate. The active-site Proton donor is tyrosine 235. NAD(+) is bound by residues lysine 244 and 273 to 275 (VVT).

This sequence belongs to the TER reductase family. Monomer.

It catalyses the reaction a 2,3-saturated acyl-[ACP] + NAD(+) = a (2E)-enoyl-[ACP] + NADH + H(+). Its pathway is lipid metabolism; fatty acid biosynthesis. Involved in the final reduction of the elongation cycle of fatty acid synthesis (FAS II). Catalyzes the reduction of a carbon-carbon double bond in an enoyl moiety that is covalently linked to an acyl carrier protein (ACP). The chain is Enoyl-[acyl-carrier-protein] reductase [NADH] from Burkholderia mallei (strain NCTC 10247).